The following is a 330-amino-acid chain: MAPEENAGTELLLQGFERRFLAVRTLRSFPWQSLEAKLRDSSDSELLRDILQKTVRHPVCVKHPPSVKYAWCFLSELIKKHEAVHTEPLDKLYEVLTETLMAKESTQGHRSYLLSSGGSVTLSKSTAIISHGTTGLVTWDAALYLAEWAIENPAAFINRTVLELGSGAGLTGLAICKMCRPRAYIFSDPHSRVLEQLRGNVLLNGLSLEADITGNLDSPRVTVAQLDWDVAMVHQLSAFQPDVVIAADVLYCPEAIVSLVGVLQRLAACREHKRAPEVYVAFTVRNPETCQLFTTELGRDGIRWEAEAHHDQKLFPYGEHLEMAMLNLTL.

Residues Trp-139, 165-167 (GSG), Trp-228, and Ala-247 each bind S-adenosyl-L-methionine.

The protein belongs to the class I-like SAM-binding methyltransferase superfamily. EEF2KMT family.

This Homo sapiens (Human) protein is Putative protein N-methyltransferase FAM86B1.